The chain runs to 702 residues: Elongation factor G (702 aa).

A tr-type G domain is found at 8–196; it reads ERYRNIGISA…MKAIIWDEAS (189 aa). Residues 17–24, 88–92, and 142–145 contribute to the GTP site; these read AHIDAGKT, DTPGH, and NKMD.

It belongs to the TRAFAC class translation factor GTPase superfamily. Classic translation factor GTPase family. EF-G/EF-2 subfamily.

It is found in the cytoplasm. Its function is as follows. Catalyzes the GTP-dependent ribosomal translocation step during translation elongation. During this step, the ribosome changes from the pre-translocational (PRE) to the post-translocational (POST) state as the newly formed A-site-bound peptidyl-tRNA and P-site-bound deacylated tRNA move to the P and E sites, respectively. Catalyzes the coordinated movement of the two tRNA molecules, the mRNA and conformational changes in the ribosome. The sequence is that of Elongation factor G (fusA) from Thiomonas delicata (Thiomonas cuprina).